A 384-amino-acid polypeptide reads, in one-letter code: Ribonucleoside-diphosphate reductase small chain (384 aa).

Positions 130, 161, and 164 each coordinate Fe cation. The active site involves Tyr168. Residues Glu224, Glu258, and His261 each coordinate Fe cation.

This sequence belongs to the ribonucleoside diphosphate reductase small chain family. Heterodimer of a large and a small subunit. Fe cation is required as a cofactor.

It catalyses the reaction a 2'-deoxyribonucleoside 5'-diphosphate + [thioredoxin]-disulfide + H2O = a ribonucleoside 5'-diphosphate + [thioredoxin]-dithiol. Provides the precursors necessary for DNA synthesis. Catalyzes the biosynthesis of deoxyribonucleotides from the corresponding ribonucleotides. The protein is Ribonucleoside-diphosphate reductase small chain of Spisula solidissima (Atlantic surf-clam).